Reading from the N-terminus, the 205-residue chain is Lymphotoxin-alpha (205 aa).

The first 34 residues, 1-34 (MTPPGRLYLPRVRGTRLLFLLLGLLLALPPRAKG), serve as a signal peptide directing secretion. Residues 63–205 (PAAHLVGDPS…SSVFFGAFAL (143 aa)) enclose the THD domain. The N-linked (GlcNAc...) asparagine glycan is linked to Asn96. An intrachain disulfide couples Cys120 to Cys156.

Belongs to the tumor necrosis factor family. Homotrimer, and heterotrimer of either two LTB and one LTA subunits or (less prevalent) two LTA and one LTB subunits. Interacts with TNFRSF14.

The protein localises to the secreted. The protein resides in the membrane. Its function is as follows. Cytokine that in its homotrimeric form binds to TNFRSF1A/TNFR1, TNFRSF1B/TNFBR and TNFRSF14/HVEM. In its heterotrimeric form with LTB binds to TNFRSF3/LTBR. Lymphotoxin is produced by lymphocytes and is cytotoxic for a wide range of tumor cells in vitro and in vivo. This Marmota monax (Woodchuck) protein is Lymphotoxin-alpha (LTA).